The following is a 462-amino-acid chain: Trigger factor (462 aa).

Residues 172–257 form the PPIase FKBP-type domain; it reads GDKATIDFVG…LKALAAPGET (86 aa). A disordered region spans residues 443 to 462; it reads LLAADEEDEEEAAESSAALV. Residues 444–455 show a composition bias toward acidic residues; that stretch reads LAADEEDEEEAA.

Belongs to the FKBP-type PPIase family. Tig subfamily.

The protein resides in the cytoplasm. It catalyses the reaction [protein]-peptidylproline (omega=180) = [protein]-peptidylproline (omega=0). Its function is as follows. Involved in protein export. Acts as a chaperone by maintaining the newly synthesized protein in an open conformation. Functions as a peptidyl-prolyl cis-trans isomerase. This Methylocella silvestris (strain DSM 15510 / CIP 108128 / LMG 27833 / NCIMB 13906 / BL2) protein is Trigger factor.